The following is a 151-amino-acid chain: Large ribosomal subunit protein bL9 (151 aa).

The protein belongs to the bacterial ribosomal protein bL9 family.

In terms of biological role, binds to the 23S rRNA. This chain is Large ribosomal subunit protein bL9, found in Pelobacter propionicus (strain DSM 2379 / NBRC 103807 / OttBd1).